A 243-amino-acid chain; its full sequence is Ribonuclease 3 (243 aa).

The RNase III domain occupies 19–144 (FNTLHKLLGF…LVGAIYLDRG (126 aa)). A Mg(2+)-binding site is contributed by glutamate 61. The active site involves aspartate 65. Positions 130 and 133 each coordinate Mg(2+). Glutamate 133 is an active-site residue. The region spanning 172-240 (SYKSLLIEWC…SKRAYYALQN (69 aa)) is the DRBM domain.

The protein belongs to the ribonuclease III family. In terms of assembly, homodimer. Mg(2+) is required as a cofactor.

Its subcellular location is the cytoplasm. The catalysed reaction is Endonucleolytic cleavage to 5'-phosphomonoester.. Digests double-stranded RNA. Involved in the processing of primary rRNA transcript to yield the immediate precursors to the large and small rRNAs (23S and 16S). Processes some mRNAs, and tRNAs when they are encoded in the rRNA operon. Processes pre-crRNA and tracrRNA of type II CRISPR loci if present in the organism. The protein is Ribonuclease 3 (rnc) of Zunongwangia profunda (strain DSM 18752 / CCTCC AB 206139 / SM-A87) (Wangia profunda).